The chain runs to 104 residues: MYAIIKNGGKQYKVKEDEVVKLEKFDLGIGEKVEFDTVLMGQTAAGEVKIGAPTVAGAKVVGEVVEQGRHKKVKIMKFRRRKHSMKQQGHRQYFTAVKVSSISL.

It belongs to the bacterial ribosomal protein bL21 family. Part of the 50S ribosomal subunit. Contacts protein L20.

Functionally, this protein binds to 23S rRNA in the presence of protein L20. This Francisella tularensis subsp. tularensis (strain FSC 198) protein is Large ribosomal subunit protein bL21.